We begin with the raw amino-acid sequence, 332 residues long: MSAETPINVVGGGAWGTALANAAAGAGHPVTLWLRDAGAAAALQAQRENPRYLPGVPLHPAIRATGEAVDLAGARATLLVVPAQTVRGVLESLRGPLATAGPVILCAKGIERGSDSFMSAVAEQVLPSGTPVAVLSGPSFAIDVARGLPTAVTLAAADAGRAAALSALLSGPSFRLYHTDDVRGVEIGGAGKNVLAIACGIVAGRGLGESARAALIARAFAELMRFARPFGGRPETLMGLSGLGDLVLTASSPQSRNFAFGQRLGAGASPAEAAGGKLAEGAFTAAALAGLAAAKGIEMPVAAAVAAIVAGTASVDDVIAGLLARPLRGETD.

NADPH contacts are provided by Trp-15, Arg-35, and Lys-108. Positions 108, 137, and 139 each coordinate sn-glycerol 3-phosphate. Ala-141 contributes to the NADPH binding site. Sn-glycerol 3-phosphate-binding residues include Lys-192, Asp-245, Ser-255, Arg-256, and Asn-257. Residue Lys-192 is the Proton acceptor of the active site. NADPH is bound at residue Arg-256. NADPH contacts are provided by Leu-278 and Glu-280.

This sequence belongs to the NAD-dependent glycerol-3-phosphate dehydrogenase family.

It localises to the cytoplasm. It carries out the reaction sn-glycerol 3-phosphate + NAD(+) = dihydroxyacetone phosphate + NADH + H(+). The enzyme catalyses sn-glycerol 3-phosphate + NADP(+) = dihydroxyacetone phosphate + NADPH + H(+). It participates in membrane lipid metabolism; glycerophospholipid metabolism. In terms of biological role, catalyzes the reduction of the glycolytic intermediate dihydroxyacetone phosphate (DHAP) to sn-glycerol 3-phosphate (G3P), the key precursor for phospholipid synthesis. The protein is Glycerol-3-phosphate dehydrogenase [NAD(P)+] of Methylobacterium radiotolerans (strain ATCC 27329 / DSM 1819 / JCM 2831 / NBRC 15690 / NCIMB 10815 / 0-1).